The sequence spans 304 residues: Glutaminase (304 aa).

Substrate is bound by residues Ser-63, Asn-114, Glu-158, Asn-165, Tyr-189, Tyr-240, and Val-258.

Belongs to the glutaminase family. Homotetramer.

It carries out the reaction L-glutamine + H2O = L-glutamate + NH4(+). The chain is Glutaminase from Shewanella baltica (strain OS195).